The primary structure comprises 145 residues: Histone H2B (145 aa).

The tract at residues 1–52 (MAPKAAAGKKPAEKKPVEEKKAEEVPAEKKPKAGKKLPKDAGRPDKKKKRAK) is disordered. N6-acetyllysine occurs at positions 9, 35, and 36. Residues 10–44 (KPAEKKPVEEKKAEEVPAEKKPKAGKKLPKDAGRP) show a composition bias toward basic and acidic residues. A Glycyl lysine isopeptide (Lys-Gly) (interchain with G-Cter in ubiquitin) cross-link involves residue Lys141.

The protein belongs to the histone H2B family. In terms of assembly, the nucleosome is a histone octamer containing two molecules each of H2A, H2B, H3 and H4 assembled in one H3-H4 heterotetramer and two H2A-H2B heterodimers. The octamer wraps approximately 147 bp of DNA. Post-translationally, can be acetylated to form H2BK6ac, H2BK33ac and H2BK34ac. In terms of processing, monoubiquitinated to form H2BK143ub1; may give a specific tag for epigenetic transcriptional activation. In terms of tissue distribution, in anthers, floral buds, pollen, petals and fruits.

Its subcellular location is the nucleus. It is found in the chromosome. Functionally, core component of nucleosome. Nucleosomes wrap and compact DNA into chromatin, limiting DNA accessibility to the cellular machineries which require DNA as a template. Histones thereby play a central role in transcription regulation, DNA repair, DNA replication and chromosomal stability. DNA accessibility is regulated via a complex set of post-translational modifications of histones, also called histone code, and nucleosome remodeling. The sequence is that of Histone H2B (HIS2B) from Capsicum annuum (Capsicum pepper).